The chain runs to 620 residues: LEAF RUST 10 DISEASE-RESISTANCE LOCUS RECEPTOR-LIKE PROTEIN KINASE-like 2.3 (620 aa).

The signal sequence occupies residues 1–30; the sequence is MDSLSSMGFQTASFFLILLFLFYHLPCVPS. The Extracellular segment spans residues 31 to 256; it reads QQERSRLCKP…NNGTYSDNRP (226 aa). Residues Asn75, Asn85, Asn93, Asn132, Asn148, Asn162, Asn189, Asn231, and Asn248 are each glycosylated (N-linked (GlcNAc...) asparagine). A helical membrane pass occupies residues 257–277; that stretch reads FLVTIGTVLGSILCVCVVLFL. Topologically, residues 278–620 are cytoplasmic; sequence AFYLNERRIA…SVESSIYSEV (343 aa). The Protein kinase domain occupies 314–596; the sequence is KSFTEVVGRG…SLDPPPKPLL (283 aa). ATP contacts are provided by residues 320–328 and Lys342; that span reads VGRGGFGTV. Asp431 acts as the Proton acceptor in catalysis. The segment at 586–620 is disordered; that stretch reads DSLDPPPKPLLHMPMQNNNAESSQLSVESSIYSEV. Positions 600 to 620 are enriched in polar residues; sequence MQNNNAESSQLSVESSIYSEV.

This sequence belongs to the protein kinase superfamily. Ser/Thr protein kinase family.

The protein localises to the membrane. The catalysed reaction is L-seryl-[protein] + ATP = O-phospho-L-seryl-[protein] + ADP + H(+). It carries out the reaction L-threonyl-[protein] + ATP = O-phospho-L-threonyl-[protein] + ADP + H(+). The chain is LEAF RUST 10 DISEASE-RESISTANCE LOCUS RECEPTOR-LIKE PROTEIN KINASE-like 2.3 from Arabidopsis thaliana (Mouse-ear cress).